The chain runs to 443 residues: MEAYIRQKRASPGMVQASDLQINRPMSGMRSNSRELHAYDGPMQFISSPQNPDQILTNGSPGGINSVAMNTSRNHSNNMRSLSTINQEADLIEEISSHELEDEESSPVTVIEQQQQSASHSANSTQSQKPRARQHSFSDNLDEDDYTNRNVAGAAPVRPAGMASSPYKDATLDGSSNGTGNGTGGESEGDVIGNIDQFVMQPAPQGVLYKCRITRDRKGMDRGLFPIYYLHLERDYGKKIFLLGGRKRKKSKTSNYIVSCDPTDLSRNADGFCGKLRSNVFGTSFTVFDNGNKESTESPRLDLAVIIYDTNILGFKGPRNMTVILPGMTEDDQRVKISSADPKQQGILDLWKMKNMDNIVELHNKTPVWNDETQSYVLNFHGRVTQASVKNFQLVHDSDPEYIVMQFGRTSEDVFTMDYRYPLCAMQAFAIALSSFDGKIACE.

2 disordered regions span residues 57–80 (TNGS…NNMR) and 98–191 (HELE…EGDV). Residues 67–80 (VAMNTSRNHSNNMR) show a composition bias toward polar residues. A compositionally biased stretch (low complexity) spans 113-128 (QQQQSASHSANSTQSQ). A Phosphoserine modification is found at Ser136. Residues 177–186 (NGTGNGTGGE) are compositionally biased toward gly residues.

Belongs to the TUB family.

It is found in the cytoplasm. The protein localises to the nucleus. It localises to the cell projection. The protein resides in the cilium membrane. Its subcellular location is the rhabdomere. This chain is Protein king tubby, found in Drosophila sechellia (Fruit fly).